A 268-amino-acid polypeptide reads, in one-letter code: Zinc transporter ZupT (268 aa).

8 helical membrane passes run 5 to 25, 38 to 58, 72 to 92, 124 to 144, 152 to 172, 187 to 207, 211 to 231, and 248 to 268; these read ILFAFSLTLLAGLATGIGSII, TVSLGFSAGVMLYVSMIEIFV, AGYIWTVIAFFVGIFVIALID, MGLFSALAIGIHNFPEGLATF, TLGISIAVAIAIHNIPEGLAV, FVLSFLSGLAEPIGAIAGFFL, LFTELTFGLVFASVAGIMVYI, and LAIGGLVGGMLVMAVSLLLFL. Fe(2+)-binding residues include Asn136 and Glu139. Residues Glu139 and His164 each coordinate Zn(2+). Residues Asn165, Glu168, and Glu197 each contribute to the Fe(2+) site. Zn(2+) is bound at residue Glu168.

The protein belongs to the ZIP transporter (TC 2.A.5) family. ZupT subfamily.

Its subcellular location is the cell inner membrane. It carries out the reaction Zn(2+)(in) = Zn(2+)(out). Mediates zinc uptake. May also transport other divalent cations. This is Zinc transporter ZupT from Chlorobaculum parvum (strain DSM 263 / NCIMB 8327) (Chlorobium vibrioforme subsp. thiosulfatophilum).